Here is a 329-residue protein sequence, read N- to C-terminus: Cytosolic arginine sensor for mTORC1 subunit 2 (329 aa).

ACT domains lie at 72 to 139 (ADAT…MHTL) and 262 to 322 (ELWK…NALQ).

Belongs to the GATS family. As to quaternary structure, may form homodimers and heterodimers.

The protein localises to the cytoplasm. It is found in the cytosol. Functions as a negative regulator of the TORC1 signaling pathway. In Xenopus laevis (African clawed frog), this protein is Cytosolic arginine sensor for mTORC1 subunit 2.